Consider the following 277-residue polypeptide: MSGFGDRLAGATARRGPLCLGIDPHPELLRAWGLGTDAAGLAGFSDICVAAFAGFAVVKPQVAFFEAYGSAGYAVLERTIAALRESGVLVLADAKRGDIGSTMAAYASAWAGDSPLAADAVTASPYLGFGSLQPLLDTAREHDRGVFVLAATSNPEGASVQCAVAPGAIPGRTVAQAIVDAAAEVNAGAARGSVGVVVGATLSAPPDVSALNGPVLVPGVGAQGGRPEALAGLGGARRGQLLPAVSREVLRAGPDVAALRAAAERMRDAVAYLGENP.

K95 functions as the Proton donor in the catalytic mechanism.

The protein belongs to the OMP decarboxylase family. Type 2 subfamily.

The catalysed reaction is orotidine 5'-phosphate + H(+) = UMP + CO2. It functions in the pathway pyrimidine metabolism; UMP biosynthesis via de novo pathway; UMP from orotate: step 2/2. The polypeptide is Orotidine 5'-phosphate decarboxylase (Mycolicibacterium vanbaalenii (strain DSM 7251 / JCM 13017 / BCRC 16820 / KCTC 9966 / NRRL B-24157 / PYR-1) (Mycobacterium vanbaalenii)).